Here is a 415-residue protein sequence, read N- to C-terminus: ATP-dependent RNA helicase RhlB (415 aa).

The Q motif signature appears at 9–37 (QRFSALPLHPIVRGALAKKGFDFCTPIQA). The region spanning 40 to 218 (LPISLNGRDV…FEDMNEPEYI (179 aa)) is the Helicase ATP-binding domain. Residue 53-60 (AQTGTGKT) participates in ATP binding. The DEAD box signature appears at 164–167 (DEAD). One can recognise a Helicase C-terminal domain in the interval 241-389 (DKMALLLTLM…VSQYETEALL (149 aa)).

The protein belongs to the DEAD box helicase family. RhlB subfamily. Component of the RNA degradosome, which is a multiprotein complex involved in RNA processing and mRNA degradation.

The protein resides in the cytoplasm. It catalyses the reaction ATP + H2O = ADP + phosphate + H(+). Functionally, DEAD-box RNA helicase involved in RNA degradation. Has RNA-dependent ATPase activity and unwinds double-stranded RNA. The polypeptide is ATP-dependent RNA helicase RhlB (Haemophilus influenzae (strain ATCC 51907 / DSM 11121 / KW20 / Rd)).